A 1076-amino-acid polypeptide reads, in one-letter code: Guanylyl cyclase C (1076 aa).

A signal peptide spans 1–23 (MKSPLLGLVVWSLLLQLLQPGLA). Residues 24-433 (FWNSQISQNC…PHDIPGLGPH (410 aa)) lie on the Extracellular side of the membrane. N35, N82, N191, N198, N287, N306, N310, N348, and N405 each carry an N-linked (GlcNAc...) asparagine glycan. The helical transmembrane segment at 434–457 (ILLIAVCTLAGVVVLILLIALLVL) threads the bilayer. At 458–1076 (RKYKKDNELR…NTTDQDSTYF (619 aa)) the chain is on the cytoplasmic side. One can recognise a Protein kinase domain in the interval 492–752 (LKIDDDKKRD…KIENTLAKIF (261 aa)). The 131-residue stretch at 827–957 (TVYFSDIVGF…DTVNTASRME (131 aa)) folds into the Guanylate cyclase domain.

It belongs to the adenylyl cyclase class-4/guanylyl cyclase family. In terms of assembly, homotrimer. Interacts via its C-terminal region with NHERF4. Interacts with the lectin chaperone VIP36. Glycosylation at Asn-62 is required for interaction with VIP36 while glycosylation at Asn-348 and Asn-405 modulates ligand-mediated GC-C activation.

Its subcellular location is the cell membrane. The protein resides in the endoplasmic reticulum membrane. It carries out the reaction GTP = 3',5'-cyclic GMP + diphosphate. Guanylyl cyclase that catalyzes synthesis of cyclic GMP (cGMP) from GTP. The chain is Guanylyl cyclase C (GUCY2C) from Cavia porcellus (Guinea pig).